A 74-amino-acid chain; its full sequence is MLWLGFIALGVAIIIAAIIWVLLYKEYKKIKLQEKIEQIRQKIRDRTEDRGKESDGDAEWLAILLSPDKLDNWV.

Residues 1 to 4 (MLWL) lie on the Extracellular side of the membrane. A helical membrane pass occupies residues 5–25 (GFIALGVAIIIAAIIWVLLYK). Over 26-74 (EYKKIKLQEKIEQIRQKIRDRTEDRGKESDGDAEWLAILLSPDKLDNWV) the chain is Cytoplasmic. Ser54 is subject to Phosphoserine; by host CK2.

It belongs to the HIV-1 VPU protein family. Homopentamer. Interacts with host CD4 and BRTC; these interactions induce proteasomal degradation of CD4. Interacts with host BST2; this interaction leads to the degradation of host BST2. Interacts with host FBXW11. Interacts with host AP1M1; this interaction plays a role in the mistrafficking and subsequent degradation of host BST2. Interacts with host RANBP2; this interaction allows Vpu to down-regulate host BLM sumoylation. Post-translationally, phosphorylated by host CK2. This phosphorylation is necessary for interaction with human BTRC and degradation of CD4.

It is found in the host membrane. Ion channel activity is inhibited by hexamethylene amiloride in vitro. Functionally, enhances virion budding by targeting host CD4 and Tetherin/BST2 to proteasome degradation. Degradation of CD4 prevents any unwanted premature interactions between viral Env and its host receptor CD4 in the endoplasmic reticulum. Degradation of antiretroviral protein Tetherin/BST2 is important for virion budding, as BST2 tethers new viral particles to the host cell membrane. Mechanistically, Vpu bridges either CD4 or BST2 to BTRC, a substrate recognition subunit of the Skp1/Cullin/F-box protein E3 ubiquitin ligase, induces their ubiquitination and subsequent proteasomal degradation. The alteration of the E3 ligase specificity by Vpu seems to promote the degradation of host IKBKB, leading to NF-kappa-B down-regulation and subsequent apoptosis. Acts as a viroporin that forms an oligomeric ion channel in membranes. Modulates the host DNA repair mechanisms to promote degradation of nuclear viral cDNA in cells that are already productively infected in order to suppress immune sensing and proviral hyper-integration (superinfection). Manipulates PML-NBs and modulates SUMOylation of host BLM protein thereby enhancing its DNA-end processing activity toward viral unintegrated linear DNA. Also inhibits RAD52-mediated homologous repair of viral cDNA, preventing the generation of dead-end circular forms of single copies of the long terminal repeat and permitting sustained nucleolytic attack. This is Protein Vpu from Human immunodeficiency virus type 1 group N (isolate YBF106) (HIV-1).